The following is a 178-amino-acid chain: Nucleoside-triphosphatase THEP1 (178 aa).

ATP is bound by residues 9-16 (GPVGSIKA) and 101-108 (VIIIDEVG).

This sequence belongs to the THEP1 NTPase family.

It carries out the reaction a ribonucleoside 5'-triphosphate + H2O = a ribonucleoside 5'-diphosphate + phosphate + H(+). In terms of biological role, has nucleotide phosphatase activity towards ATP, GTP, CTP, TTP and UTP. May hydrolyze nucleoside diphosphates with lower efficiency. This is Nucleoside-triphosphatase THEP1 from Thermoplasma volcanium (strain ATCC 51530 / DSM 4299 / JCM 9571 / NBRC 15438 / GSS1).